The sequence spans 458 residues: MTDAATNMRLKLPITCFILEIILIILFGTLVQYDYETDAKEWHNTSHQDYENDFYFRYPSFQDVHVMIFVGFGFLMTFLQRYGFGSVGFNFLIAAFSLQWATLMQGFFHGMHGGKIHIGVESMINADFCTGSVLISFGAVLGKTSPIQLLTMAIFEVTLFAVNEFILLSLLGTKDAGGSMTIHTFGAYFGLMVTRILYRPNLDKSKHRNSSVYHSDLFAMIGTVYLWMFWPSFNSAITAHGDDQHRTALNTYYSLAACTLATYGMSAITSHDGKLDMVHIQNAALAGGVAVGTAGEMMLTPFGSMIVGFMAGIISVLGFKFLSPILEDKLKIQDTCGIHNLHGMPGVLGAIVGAVTAALATTDVYGQGMADVFPAVADGSVNATKQGGIQALSLAITLGIAVLGGLIVGFVLKLPVFGTPPDTLCFEDSVYWEVPGSESPEEGELTSVKPEETEHLNS.

The Cytoplasmic portion of the chain corresponds to Met1 to Lys11. The chain crosses the membrane as a helical span at residues Leu12–Gln32. At Tyr33–Tyr58 the chain is on the extracellular side. An N-linked (GlcNAc...) asparagine glycan is attached at Asn44. Residues Pro59–Leu79 traverse the membrane as a helical segment. The Cytoplasmic portion of the chain corresponds to Gln80 to Gly83. The chain crosses the membrane as a helical span at residues Phe84–Met104. The Extracellular portion of the chain corresponds to Gln105–Glu121. Residues Ser122–Gly142 traverse the membrane as a helical segment. The Cytoplasmic segment spans residues Lys143–Thr151. Residues Met152–Gly172 traverse the membrane as a helical segment. Residues Thr173 to Ala176 lie on the Extracellular side of the membrane. A helical transmembrane segment spans residues Gly177–Leu197. Topologically, residues Tyr198 to Asp216 are cytoplasmic. Residues Leu217–Ile237 form a helical membrane-spanning segment. Topologically, residues Thr238–Thr247 are extracellular. The helical transmembrane segment at Ala248–Ser270 threads the bilayer. Topologically, residues His271–Lys274 are cytoplasmic. A helical transmembrane segment spans residues Leu275–Gly295. The Extracellular segment spans residues Glu296–Met298. Residues Leu299–Phe319 traverse the membrane as a helical segment. Residues Lys320–Asn340 lie on the Cytoplasmic side of the membrane. Residues Leu341–Thr361 form a helical membrane-spanning segment. Topologically, residues Thr362–Ala391 are extracellular. The chain crosses the membrane as a helical span at residues Leu392 to Leu412. Residues Lys413–Ser458 are Cytoplasmic-facing. The tract at residues Gly436–Ser458 is disordered. Over residues Lys449–Ser458 the composition is skewed to basic and acidic residues.

It belongs to the ammonium transporter (TC 2.A.49) family. Rh subfamily. In terms of tissue distribution, specifically expressed in the gill by pavement cells (at protein level).

It localises to the apicolateral cell membrane. The protein resides in the cytoplasmic vesicle membrane. Its function is as follows. Functions as an ammonia transporter. May play a role in the elimination of ammonia in the gill. This is Ammonium transporter Rh type B (rhbg) from Takifugu rubripes (Japanese pufferfish).